Here is a 511-residue protein sequence, read N- to C-terminus: Ulvan-active sulfatase (511 aa).

The first 34 residues, 1-34 (MNFKQNIVYKKMAISMKITAIRPIALVISFTLLS), serve as a signal peptide directing secretion. C35 carries N-palmitoyl cysteine lipidation. C35 carries the S-diacylglycerol cysteine lipid modification. Ca(2+)-binding residues include D59 and C99. The active-site Nucleophile is the C99. C99 carries the 3-oxoalanine (Cys) modification. The active site involves H149. A Ca(2+)-binding site is contributed by D305.

This sequence belongs to the sulfatase family. It depends on Ca(2+) as a cofactor. The conversion to 3-oxoalanine (also known as C-formylglycine, FGly), of a serine or cysteine residue in prokaryotes and of a cysteine residue in eukaryotes, is critical for catalytic activity. This post-translational modification is severely defective in multiple sulfatase deficiency (MSD).

The protein resides in the cell membrane. Sulfatase involved in ulvan degradation. Ulvan is the main polysaccharide component of the Ulvales (green seaweed) cell wall. It is composed of disaccharide building blocks comprising 3-sulfated rhamnose (Rha3S) linked to D-glucuronic acid (GlcA), L-iduronic acid (IduA), or D-xylose (Xyl). The polypeptide is Ulvan-active sulfatase (Formosa agariphila (strain DSM 15362 / KCTC 12365 / LMG 23005 / KMM 3901 / M-2Alg 35-1)).